A 370-amino-acid polypeptide reads, in one-letter code: Flagellar P-ring protein (370 aa).

An N-terminal signal peptide occupies residues 1 to 21; it reads MKLLLFILMISSIIIVPVGQA.

The protein belongs to the FlgI family. In terms of assembly, the basal body constitutes a major portion of the flagellar organelle and consists of four rings (L,P,S, and M) mounted on a central rod.

The protein localises to the periplasm. It localises to the bacterial flagellum basal body. Functionally, assembles around the rod to form the L-ring and probably protects the motor/basal body from shearing forces during rotation. The protein is Flagellar P-ring protein of Pseudoalteromonas atlantica (strain T6c / ATCC BAA-1087).